The sequence spans 89 residues: MAKKSKIAKYHKQLQLIEQYADLRRELKAKGDYEALRKLPRDSNPNRLKNRDRIDGRPHAYMRKFGVSRINFRELAHKGQLPGITKASW.

This sequence belongs to the universal ribosomal protein uS14 family. As to quaternary structure, part of the 30S ribosomal subunit. Contacts proteins S3 and S10.

Its function is as follows. Binds 16S rRNA, required for the assembly of 30S particles and may also be responsible for determining the conformation of the 16S rRNA at the A site. The polypeptide is Small ribosomal subunit protein uS14A (Streptococcus equi subsp. zooepidemicus (strain MGCS10565)).